The primary structure comprises 332 residues: MEAQNQEVAALVEKIAGLHAAISKLPSLSPSAEVDALFTDLVTACVPASPVDVAKLGPEAQAMREELIRLCSAAEGHLEAHYADMLAAFDNPLDHLARFPYYGNYVNLSKLEYDLLVRYVPGIAPTRVAFVGSGPLPFSSLVLAAHHLPDAVFDNYDRCGAANERARRLFRGADEGLGARMAFHTADVATLTGELGAYDVVFLAALVGMAAEEKAGVIAHLGAHMADGAALVVRSAHGARGFLYPIVDPEDVRRGGFDVLAVCHPEDEVINSVIVARKVGAAAAAAAARRDELADSRGVVLPVVGPPSTCCKVEASAVEKAEEFAANKELSV.

This sequence belongs to the nicotianamine synthase (NAS)-like family. In terms of tissue distribution, expressed in roots.

It catalyses the reaction 3 S-adenosyl-L-methionine = nicotianamine + 3 S-methyl-5'-thioadenosine + 3 H(+). Functionally, synthesizes nicotianamine, a polyamine that is the first intermediate in the synthesis of the phytosiderophores of the mugineic acid type found in gramineae which serve as a sensor for the physiological iron status within the plant, and/or might be involved in the transport of iron. In Oryza sativa subsp. indica (Rice), this protein is Nicotianamine synthase 1 (NAS1).